The primary structure comprises 94 residues: Phosphoribosyl-ATP pyrophosphatase (94 aa).

It belongs to the PRA-PH family.

It is found in the cytoplasm. It catalyses the reaction 1-(5-phospho-beta-D-ribosyl)-ATP + H2O = 1-(5-phospho-beta-D-ribosyl)-5'-AMP + diphosphate + H(+). The protein operates within amino-acid biosynthesis; L-histidine biosynthesis; L-histidine from 5-phospho-alpha-D-ribose 1-diphosphate: step 2/9. The protein is Phosphoribosyl-ATP pyrophosphatase of Pyrobaculum arsenaticum (strain DSM 13514 / JCM 11321 / PZ6).